Reading from the N-terminus, the 429-residue chain is D-amino acid dehydrogenase (429 aa).

3–17 (VLILGSGVIGVTSAW) provides a ligand contact to FAD.

The protein belongs to the DadA oxidoreductase family. The cofactor is FAD.

The catalysed reaction is a D-alpha-amino acid + A + H2O = a 2-oxocarboxylate + AH2 + NH4(+). It participates in amino-acid degradation; D-alanine degradation; NH(3) and pyruvate from D-alanine: step 1/1. In terms of biological role, oxidative deamination of D-amino acids. The chain is D-amino acid dehydrogenase from Xanthomonas euvesicatoria pv. vesicatoria (strain 85-10) (Xanthomonas campestris pv. vesicatoria).